The following is a 168-amino-acid chain: Cytochrome c-type biogenesis protein CcmE (168 aa).

Residues 1–23 lie on the Cytoplasmic side of the membrane; that stretch reads MTTAPSGLPGTPLPPARRRERPR. Residues 24-44 traverse the membrane as a helical; Signal-anchor for type II membrane protein segment; sequence WPLLVAGAAVLGLIGYMVLGN. Residues 45–168 lie on the Extracellular side of the membrane; that stretch reads ANSNLVYYVL…KILNDQSTKP (124 aa). The heme site is built by histidine 137 and tyrosine 141. The disordered stretch occupies residues 145 to 168; the sequence is DSKGEGQYSQDDLKKILNDQSTKP.

This sequence belongs to the CcmE/CycJ family.

It is found in the cell membrane. Its function is as follows. Heme chaperone required for the biogenesis of c-type cytochromes. Transiently binds heme delivered by CcmC and transfers the heme to apo-cytochromes in a process facilitated by CcmF and CcmH. The chain is Cytochrome c-type biogenesis protein CcmE from Deinococcus radiodurans (strain ATCC 13939 / DSM 20539 / JCM 16871 / CCUG 27074 / LMG 4051 / NBRC 15346 / NCIMB 9279 / VKM B-1422 / R1).